A 421-amino-acid polypeptide reads, in one-letter code: 26S proteasome non-ATPase regulatory subunit 11A (421 aa).

Residues 227–391 (AYSYFYEAFE…GVLIVFDEPP (165 aa)) form the PCI domain.

Belongs to the proteasome subunit S9 family. As to quaternary structure, component of the lid subcomplex of the 19S proteasome regulatory particle complex (also named PA700 complex). The 26S proteasome consists of a 20S proteasome core and two 19S regulatory subunits.

The protein resides in the nucleus. It localises to the cytoplasm. Its subcellular location is the cytosol. In terms of biological role, component of the lid subcomplex of the 26S proteasome, a multiprotein complex involved in the ATP-dependent degradation of ubiquitinated proteins. In the complex, psmd11a is required for proteasome assembly. The sequence is that of 26S proteasome non-ATPase regulatory subunit 11A (psmd11a) from Danio rerio (Zebrafish).